The sequence spans 434 residues: Gamma-glutamyl phosphate reductase (434 aa).

It belongs to the gamma-glutamyl phosphate reductase family.

It localises to the cytoplasm. It catalyses the reaction L-glutamate 5-semialdehyde + phosphate + NADP(+) = L-glutamyl 5-phosphate + NADPH + H(+). Its pathway is amino-acid biosynthesis; L-proline biosynthesis; L-glutamate 5-semialdehyde from L-glutamate: step 2/2. Functionally, catalyzes the NADPH-dependent reduction of L-glutamate 5-phosphate into L-glutamate 5-semialdehyde and phosphate. The product spontaneously undergoes cyclization to form 1-pyrroline-5-carboxylate. The chain is Gamma-glutamyl phosphate reductase from Rhodopirellula baltica (strain DSM 10527 / NCIMB 13988 / SH1).